The chain runs to 1187 residues: Metabotropic glutamate receptor-like protein Q (1187 aa).

Residues Met-1–Thr-735 are Extracellular-facing. N-linked (GlcNAc...) asparagine glycosylation is found at Asn-35, Asn-44, Asn-55, Asn-177, Asn-258, Asn-275, Asn-397, Asn-402, Asn-462, Asn-526, Asn-527, Asn-557, Asn-562, and Asn-684. A helical transmembrane segment spans residues Val-736–Ile-756. At Ala-757–Asn-768 the chain is on the cytoplasmic side. A helical transmembrane segment spans residues Ile-769 to Ser-789. The Extracellular portion of the chain corresponds to Ile-790–Ser-796. The N-linked (GlcNAc...) asparagine glycan is linked to Asn-794. A helical membrane pass occupies residues Cys-797 to Leu-817. At Lys-818–Lys-843 the chain is on the cytoplasmic side. The chain crosses the membrane as a helical span at residues Tyr-844–Pro-864. At Ser-865 to Tyr-888 the chain is on the extracellular side. A helical membrane pass occupies residues Val-889–Ala-909. The Cytoplasmic segment spans residues Met-910–Ser-925. A helical transmembrane segment spans residues Leu-926 to Phe-946. The Extracellular segment spans residues Tyr-947–Thr-955. The helical transmembrane segment at Ile-956–Phe-976 threads the bilayer. At Ile-977–Leu-1095 the chain is on the cytoplasmic side. Residues Ile-1074–Ser-1105 are compositionally biased toward polar residues. The interval Ile-1074–Ser-1187 is disordered. Over residues Lys-1114–Ile-1124 the composition is skewed to basic residues. Low complexity predominate over residues Ile-1125–Asn-1174.

Belongs to the G-protein coupled receptor 3 family. GABA-B receptor subfamily.

The protein localises to the membrane. This is Metabotropic glutamate receptor-like protein Q (grlQ) from Dictyostelium discoideum (Social amoeba).